Here is a 215-residue protein sequence, read N- to C-terminus: Large ribosomal subunit protein bL25 (215 aa).

A compositionally biased stretch (acidic residues) spans 192–203 (EEATEEEEEAAE). Residues 192–215 (EEATEEEEEAAEPEVIKRKEEEEE) form a disordered region. The span at 205-215 (EVIKRKEEEEE) shows a compositional bias: basic and acidic residues.

This sequence belongs to the bacterial ribosomal protein bL25 family. CTC subfamily. In terms of assembly, part of the 50S ribosomal subunit; part of the 5S rRNA/L5/L18/L25 subcomplex. Contacts the 5S rRNA. Binds to the 5S rRNA independently of L5 and L18.

Functionally, this is one of the proteins that binds to the 5S RNA in the ribosome where it forms part of the central protuberance. The chain is Large ribosomal subunit protein bL25 from Thermotoga sp. (strain RQ2).